Reading from the N-terminus, the 138-residue chain is Basic phospholipase A2 homolog Ts-K49a (138 aa).

A signal peptide spans 1–16 (MRTLWIMAVLLLGVEG). Disulfide bonds link C42-C131, C44-C60, C59-C111, C65-C138, C66-C104, C73-C97, and C91-C102. The important for membrane-damaging activities in eukaryotes and bacteria; heparin-binding stretch occupies residues 121–133 (KKKKINLKLFCKK).

As to expression, expressed by the venom gland.

The protein localises to the secreted. Snake venom phospholipase A2 homolog that lacks catalytic activity. It shows myotoxic and weak anticoagulant activities and induces local edema a few hours after injection (5-10 ug) in the hind paw. A model of myotoxic mechanism has been proposed: an apo Lys49-PLA2 is activated by the entrance of a hydrophobic molecule (e.g. fatty acid) at the hydrophobic channel of the protein leading to a reorientation of a monomer. This reorientation causes a transition between 'inactive' to 'active' states, causing alignment of C-terminal and membrane-docking sites (MDoS) side-by-side and putting the membrane-disruption sites (MDiS) in the same plane, exposed to solvent and in a symmetric position for both monomers. The MDoS region stabilizes the toxin on membrane by the interaction of charged residues with phospholipid head groups. Subsequently, the MDiS region destabilizes the membrane with penetration of hydrophobic residues. This insertion causes a disorganization of the membrane, allowing an uncontrolled influx of ions (i.e. calcium and sodium), and eventually triggering irreversible intracellular alterations and cell death. The sequence is that of Basic phospholipase A2 homolog Ts-K49a from Trimeresurus stejnegeri (Chinese green tree viper).